The primary structure comprises 335 residues: Glucokinase (335 aa).

11 to 16 contacts ATP; that stretch reads ADIGGT.

The protein belongs to the bacterial glucokinase family.

The protein resides in the cytoplasm. The catalysed reaction is D-glucose + ATP = D-glucose 6-phosphate + ADP + H(+). This chain is Glucokinase, found in Xanthomonas campestris pv. campestris (strain 8004).